The sequence spans 104 residues: Large ribosomal subunit protein uL24 (104 aa).

Belongs to the universal ribosomal protein uL24 family. As to quaternary structure, part of the 50S ribosomal subunit.

In terms of biological role, one of two assembly initiator proteins, it binds directly to the 5'-end of the 23S rRNA, where it nucleates assembly of the 50S subunit. Functionally, one of the proteins that surrounds the polypeptide exit tunnel on the outside of the subunit. This Buchnera aphidicola subsp. Acyrthosiphon pisum (strain 5A) protein is Large ribosomal subunit protein uL24.